Consider the following 63-residue polypeptide: Kappa-theraphotoxin-Gr3a (63 aa).

An N-terminal signal peptide occupies residues 1–21; sequence MKTSVFVLVLGLVLLFAVSFA. Positions 22-29 are excised as a propeptide; the sequence is TEMEESAR. Cystine bridges form between Cys-31-Cys-45, Cys-38-Cys-50, and Cys-44-Cys-57.

Belongs to the neurotoxin 10 (Hwtx-1) family. 63 (VsTx1) subfamily. Expressed by the venom gland.

The protein resides in the secreted. Inhibits sodium channels Nav1.7/SCN9A and potassium channels Kv11.1/KCNH2. Also binds the voltage-sensor domain of the potassium channel KvAP (from the archaeon Aeropyrum pernix) with very slow apparent binding kinetics and affects channel gating. Reaches its target by dynamically partitioning into anionic or zwitterionic headgroup lipid membranes. May bind to the open state of KvAP. This is Kappa-theraphotoxin-Gr3a from Grammostola rosea (Chilean rose tarantula).